A 336-amino-acid polypeptide reads, in one-letter code: tRNA N6-adenosine threonylcarbamoyltransferase (336 aa).

Positions 115 and 119 each coordinate Fe cation. Substrate is bound by residues 137-141, Asp170, Gly183, Asp187, and Asn276; that span reads LVSGG. Asp302 provides a ligand contact to Fe cation.

The protein belongs to the KAE1 / TsaD family. It depends on Fe(2+) as a cofactor.

It is found in the cytoplasm. The enzyme catalyses L-threonylcarbamoyladenylate + adenosine(37) in tRNA = N(6)-L-threonylcarbamoyladenosine(37) in tRNA + AMP + H(+). Required for the formation of a threonylcarbamoyl group on adenosine at position 37 (t(6)A37) in tRNAs that read codons beginning with adenine. Is involved in the transfer of the threonylcarbamoyl moiety of threonylcarbamoyl-AMP (TC-AMP) to the N6 group of A37, together with TsaE and TsaB. TsaD likely plays a direct catalytic role in this reaction. The protein is tRNA N6-adenosine threonylcarbamoyltransferase of Streptococcus suis (strain 98HAH33).